The sequence spans 261 residues: Ribosome-inactivating protein PD-L3/PD-L4 (261 aa).

N-linked (GlcNAc...) asparagine; in PD-L3 glycosylation occurs at N10. 2 disulfides stabilise this stretch: C34/C258 and C84/C105. The active site involves E175.

Belongs to the ribosome-inactivating protein family. Type 1 RIP subfamily.

The enzyme catalyses Endohydrolysis of the N-glycosidic bond at one specific adenosine on the 28S rRNA.. Functionally, inhibits protein synthesis. Does not cleave supercoiled pBR322 dsDNA. This chain is Ribosome-inactivating protein PD-L3/PD-L4, found in Phytolacca dioica (Bella sombra tree).